We begin with the raw amino-acid sequence, 213 residues long: Thymidylate kinase (213 aa).

7–14 (GMDGSGKT) serves as a coordination point for ATP.

Belongs to the thymidylate kinase family.

The catalysed reaction is dTMP + ATP = dTDP + ADP. Functionally, phosphorylation of dTMP to form dTDP in both de novo and salvage pathways of dTTP synthesis. The chain is Thymidylate kinase from Mycoplasma capricolum subsp. capricolum (strain California kid / ATCC 27343 / NCTC 10154).